A 267-amino-acid chain; its full sequence is Membrane-associated protein Vipp1 (267 aa).

The stretch at 26-156 (EKVLEQAVID…KANAELQQTL (131 aa)) forms a coiled coil. The interval 224 to 252 (GTSAATPQLEAAPVDSSVPANNASQDDAV) is disordered.

Belongs to the PspA/Vipp/IM30 family.

Its subcellular location is the cell inner membrane. In terms of biological role, required for thylakoid formation. In Synechocystis sp. (strain ATCC 27184 / PCC 6803 / Kazusa), this protein is Membrane-associated protein Vipp1.